Consider the following 114-residue polypeptide: uncharacterized protein (114 aa).

The next 2 membrane-spanning stretches (helical) occupy residues 58-78 (CLLG…FFLL) and 94-114 (SISY…FCLA).

Its subcellular location is the membrane. This is an uncharacterized protein from Saccharomyces cerevisiae (strain ATCC 204508 / S288c) (Baker's yeast).